A 163-amino-acid polypeptide reads, in one-letter code: Cyclic pyranopterin monophosphate synthase (163 aa).

Residues 76–78 (LCH) and 114–115 (ME) each bind substrate. D129 is a catalytic residue.

This sequence belongs to the MoaC family. In terms of assembly, homohexamer; trimer of dimers.

The enzyme catalyses (8S)-3',8-cyclo-7,8-dihydroguanosine 5'-triphosphate = cyclic pyranopterin phosphate + diphosphate. Its pathway is cofactor biosynthesis; molybdopterin biosynthesis. In terms of biological role, catalyzes the conversion of (8S)-3',8-cyclo-7,8-dihydroguanosine 5'-triphosphate to cyclic pyranopterin monophosphate (cPMP). The sequence is that of Cyclic pyranopterin monophosphate synthase from Desulfovibrio desulfuricans (strain ATCC 27774 / DSM 6949 / MB).